Here is an 898-residue protein sequence, read N- to C-terminus: MASENPFRSILKALEKPDGGEFGNYYSLPALNDPRIDKLPYSIRILLESAIRNCDEFQVKSKDVEKILDWENTSPKQVEIPFKPARVLLQDFTGVPAVVDLACMRDAMNNLGGDSNKINPLVPVDLVIDHSVQVDVARSENAVQANMELEFQRNKERFAFLKWGSNAFHNMLVVPPGSGIVHQVNLEYLARVVFNTNGLLYPDSVVGTDSHTTMIDGLGVAGWGVGGIEAEATMLGQPMSMVLPGVVGFKLTGKLRDGMTATDLVLTVTQMLRKHGVVGKFVEFHGEGMRELSLADRATIANMSPEYGATMGFFPVDHVTLQYLRLTGRSDDTVSMIEAYLRANKMFVDYSEPESKTVYSSCLELNLEDVEPCVSGPKRPHDRVPLKEMKADWHSCLDNRVGFKGFAVPKEAQSKAVEFNFNGTTAQLRHGDVVIAAITSCTNTSNPSVMLGAALVAKKACDLGLEVKPWIKTSLAPGSGVVTKYLAKSGLQKYLNQLGFSIVGYGCTTCIGNSGDIHEAVASAIVDNDLVASAVLSGNRNFEGRVHPLTRANYLASPPLVVAYALAGTVDIDFETQPIGTGKDGKQIFFRDIWPSNKEVAEVVQSSVLPDMFKATYEAITKGNSMWNQLSVASGTLYEWDPKSTYIHEPPYFKGMTMSPPGPHGVKDAYCLLNFGDSITTDHISPAGSIHKDSPAAKYLMERGVDRRDFNSYGSRRGNDEIMARGTFANIRIVNKHLKGEVGPKTVHIPTGEKLSVFDAAMKYRNEGRDTIILAGAEYGSGSSRDWAAKGPMLLGVKAVISKSFERIHRSNLVGMGIIPLCFKAGEDAETLGLTGQELYTIELPNNVSEIKPGQDVTVVTNNGKSFTCTLRFDTEVELAYFDHGGILQYVIRNLIKQ.

Ala-2 is subject to N-acetylalanine. Residues Gln-90 and 209–211 each bind substrate; that span reads DSH. The [4Fe-4S] cluster site is built by Cys-441, Cys-507, and Cys-510. Substrate-binding positions include Arg-540, Arg-545, Arg-703, and 784–785; that span reads SR.

It belongs to the aconitase/IPM isomerase family. As to quaternary structure, monomer. [4Fe-4S] cluster serves as cofactor. Mostly expressed in roots, stems and leaves, also present in stems and flowers.

It is found in the cytoplasm. It localises to the mitochondrion. The enzyme catalyses citrate = D-threo-isocitrate. Its pathway is carbohydrate metabolism; tricarboxylic acid cycle; isocitrate from oxaloacetate: step 2/2. Catalyzes the isomerization of citrate to isocitrate via cis-aconitate. Contributes to oxidative stress tolerance. May have a role in respiration. The chain is Aconitate hydratase 1 from Arabidopsis thaliana (Mouse-ear cress).